We begin with the raw amino-acid sequence, 176 residues long: RNA pyrophosphohydrolase (176 aa).

Positions 6–149 (GYRPNVGIVI…KRDVYRRVMK (144 aa)) constitute a Nudix hydrolase domain. The short motif at 38–59 (GGINPGESAEQAMYRELFEEVG) is the Nudix box element.

It belongs to the Nudix hydrolase family. RppH subfamily. The cofactor is a divalent metal cation.

In terms of biological role, accelerates the degradation of transcripts by removing pyrophosphate from the 5'-end of triphosphorylated RNA, leading to a more labile monophosphorylated state that can stimulate subsequent ribonuclease cleavage. In Salmonella arizonae (strain ATCC BAA-731 / CDC346-86 / RSK2980), this protein is RNA pyrophosphohydrolase.